The primary structure comprises 1186 residues: DNA excision repair protein ERCC-5 (1186 aa).

Residues 1–78 (MGVQGLWKLL…RIRPIFVFDG (78 aa)) form an N-domain region. Lys-8 carries the post-translational modification N6-acetyllysine. Residue Asp-30 coordinates Mg(2+). The tract at residues 31-67 (ISIWLNQALKGVRDRHGNSIENPHLLTLFHRLCKLLF) is DNA-binding; may bind to the undamaged single-strand DNA of the DNA repair bubble. A Mg(2+)-binding site is contributed by Asp-77. Positions 79-785 (DAPLLKKQTL…LRLFGIPYIQ (707 aa)) are spacer region. 5 disordered regions span residues 306 to 342 (ESLPSSSKMHGMSFDVKSSPCEKLKTEKEPDATPPSP), 354 to 385 (GSSSEEELESENRRQARGRNAPAAVDEGSISP), 404 to 473 (CAGD…SVPK), 510 to 533 (HSDAPGLPNGRELTPASPTCTNSV), and 667 to 724 (QAEF…AEDS). Residues 325–336 (PCEKLKTEKEPD) show a composition bias toward basic and acidic residues. Phosphoserine is present on Ser-384. Residues 454–472 (AEEHVASTNEGREPTDSVP) are compositionally biased toward basic and acidic residues. The residue at position 705 (Ser-705) is a Phosphoserine. The interval 786-881 (APMEAEAQCA…VTAMEILNEF (96 aa)) is I-domain. Mg(2+)-binding residues include Glu-789, Glu-791, Asp-810, and Asp-812. Positions 820–836 (HVYRNFFNKNKFVEYYQ) are DNA-binding; may bind to the undamaged single-strand DNA of the DNA repair bubble. The DNA-binding; H2TH (helix-2turn-helix) motif which binds double-stranded DNA stretch occupies residues 848-880 (RNKLINLAYLLGSDYTEGIPTVGCVTAMEILNE). Asp-861 is a binding site for Mg(2+). The DNA-binding; may bind double-stranded DNA stretch occupies residues 912 to 918 (TKVKKKL). The segment at 981-1009 (LKQLDAQQTQLRIDSFFRLAQQEKEDAKR) is interaction with PCNA. An interaction with ERCC6/CSB region spans residues 1011 to 1186 (KSQRLNRAVT…RRARGRKRKT (176 aa)). 2 disordered regions span residues 1056–1081 (QKRGITNTLEESSSLKRKRLSDSKGK) and 1095–1186 (ESSD…KRKT). Positions 1057 to 1074 (KRGITNTLEESSSLKRKR) match the Nuclear localization signal 1 motif. Positions 1124–1133 (TSASDSQNSV) are enriched in polar residues. A Nuclear localization signal 2 motif is present at residues 1169–1186 (FGKKRRKLRRARGRKRKT). A compositionally biased stretch (basic residues) spans 1169–1186 (FGKKRRKLRRARGRKRKT).

It belongs to the XPG/RAD2 endonuclease family. XPG subfamily. Monomer. Homodimer. Component of the homologous recombination repair (HR) complex composed of ERCC5/XPG, BRCA2, PALB2, DSS1 and RAD51. Within the complex, interacts with BRCA2 and PALB2. Interacts with RNA polymerase II. Interacts (via C-terminus) with ERCC6/CSB; the interaction stimulates ERCC6/CSB binding to the DNA repair bubble and ERCC6/CSB ATPase activity. May form a complex composed of RNA polymerase II, ERCC6/CSB and ERCC5/XPG which associates with the DNA repair bubble during transcription-coupled nucleotide excision repair. Interacts with BRCA1; the interaction promotes the release of BRCA1 from DNA. Interacts with PCNA. Interacts with NTHL1; the interaction stimulates NTHL1 activity and NTHL1 binding to its DNA substrate. The cofactor is Mg(2+).

The protein resides in the nucleus. It localises to the chromosome. Its function is as follows. Single-stranded structure-specific DNA endonuclease involved in DNA excision repair. Makes the 3'incision in DNA nucleotide excision repair (NER). Binds and bends DNA repair bubble substrate and breaks base stacking at the single-strand/double-strand DNA junction of the DNA bubble. Plays a role in base excision repair (BER) by promoting the binding of DNA glycosylase NTHL1 to its substrate and increasing NTHL1 catalytic activity that removes oxidized pyrimidines from DNA. Involved in transcription-coupled nucleotide excision repair (TCR) which allows RNA polymerase II-blocking lesions to be rapidly removed from the transcribed strand of active genes. Functions during the initial step of TCR in cooperation with ERCC6/CSB to recognized stalled RNA polymerase II. Also, stimulates ERCC6/CSB binding to the DNA repair bubble and ERCC6/CSB ATPase activity. Required for DNA replication fork maintenance and preservation of genomic stability. Involved in homologous recombination repair (HRR) induced by DNA replication stress by recruiting RAD51, BRCA2, and PALB2 to the damaged DNA site. In TFIIH stimulates the 5'-3' helicase activity of XPD/ERCC2 and the DNA translocase activity of XPB/ERCC3. During HRR, binds to the replication fork with high specificity and stabilizes it. Also, acts upstream of HRR, to promote the release of BRCA1 from DNA. In Homo sapiens (Human), this protein is DNA excision repair protein ERCC-5 (ERCC5).